A 482-amino-acid polypeptide reads, in one-letter code: Exodeoxyribonuclease 7 large subunit (482 aa).

Residues 457-482 (TLDTGGAPAKPASKPKQKPPEQGSLF) form a disordered region.

This sequence belongs to the XseA family. As to quaternary structure, heterooligomer composed of large and small subunits.

The protein localises to the cytoplasm. It catalyses the reaction Exonucleolytic cleavage in either 5'- to 3'- or 3'- to 5'-direction to yield nucleoside 5'-phosphates.. In terms of biological role, bidirectionally degrades single-stranded DNA into large acid-insoluble oligonucleotides, which are then degraded further into small acid-soluble oligonucleotides. The protein is Exodeoxyribonuclease 7 large subunit of Ruegeria pomeroyi (strain ATCC 700808 / DSM 15171 / DSS-3) (Silicibacter pomeroyi).